Here is a 407-residue protein sequence, read N- to C-terminus: Argininosuccinate synthase (407 aa).

Residues Ala13–Ser21 and Ala40 contribute to the ATP site. Tyr91 and Ser96 together coordinate L-citrulline. Gly121 provides a ligand contact to ATP. Positions 123, 127, and 128 each coordinate L-aspartate. Asn127 is an L-citrulline binding site. Positions 131, 182, 191, 267, and 279 each coordinate L-citrulline.

Belongs to the argininosuccinate synthase family. Type 1 subfamily. As to quaternary structure, homotetramer.

The protein resides in the cytoplasm. It carries out the reaction L-citrulline + L-aspartate + ATP = 2-(N(omega)-L-arginino)succinate + AMP + diphosphate + H(+). It functions in the pathway amino-acid biosynthesis; L-arginine biosynthesis; L-arginine from L-ornithine and carbamoyl phosphate: step 2/3. The sequence is that of Argininosuccinate synthase from Bartonella bacilliformis (strain ATCC 35685 / KC583 / Herrer 020/F12,63).